A 133-amino-acid chain; its full sequence is UPF0292 protein TGAM_1777 (133 aa).

The 81-residue stretch at 20 to 100 (EGALIVEGLR…RVDVETRREL (81 aa)) folds into the Toprim domain. The Mg(2+) site is built by Glu-26, Asp-69, and Asp-71.

Belongs to the UPF0292 family. It depends on Mg(2+) as a cofactor.

The protein is UPF0292 protein TGAM_1777 of Thermococcus gammatolerans (strain DSM 15229 / JCM 11827 / EJ3).